The primary structure comprises 496 residues: Transmembrane protein 104 (496 aa).

The Cytoplasmic portion of the chain corresponds to 1–10 (MAGEITETGE). A helical membrane pass occupies residues 11 to 31 (LYSSYVGLVYMFNLIVGTGAL). The Extracellular portion of the chain corresponds to 32–36 (TMPKA). The helical transmembrane segment at 37-57 (FATAGWLVSLVLLVFLGFMSF) threads the bilayer. Topologically, residues 58-146 (VTTTFVIEAM…SMFFNKVGVN (89 aa)) are cytoplasmic. Residues 147–167 (LFYFCIIVYLYGDLAIYAAAV) form a helical membrane-spanning segment. Topologically, residues 168-204 (PFSLMQVTCSATGNDSCGVEADTKYNDTDRCWGPLRR) are extracellular. N-linked (GlcNAc...) asparagine glycosylation is present at N193. Residues 205–225 (VDAYRIYLAIFTLLLGPFTFF) traverse the membrane as a helical segment. The Cytoplasmic portion of the chain corresponds to 226-233 (DVQKTKYL). Residues 234–254 (QILTSLMRWIAFAVMIVLALI) traverse the membrane as a helical segment. The Extracellular portion of the chain corresponds to 255-276 (RIGHGQGEGHPPLADFSGVRNL). Residues 277–297 (FGVCVYSFMCQHSLPSLITPV) form a helical membrane-spanning segment. Residues 298–306 (SSKRHLTRL) lie on the Cytoplasmic side of the membrane. The chain crosses the membrane as a helical span at residues 307–327 (VFLDYVLILAFYGLLSFTAIF). The Extracellular segment spans residues 328–354 (CFRGDSLMDMYTLNFARCDVVGLAAVR). Residues 355–375 (FFLGLFPVFTISTNFPIIAVT) traverse the membrane as a helical segment. At 376–397 (LRNNWKTLFHREGGTYPWVVDR) the chain is on the cytoplasmic side. A helical transmembrane segment spans residues 398–418 (VVFPTITLVPPVLVAFCTHDL). Over 419-421 (ESL) the chain is Extracellular. The chain crosses the membrane as a helical span at residues 422 to 442 (VGITGAYAGTGIQYVIPAFLV). Residues 443 to 470 (YHCRRDTQLAFGCGVSNKHRSPFRHTFW) are Cytoplasmic-facing. Residues 471 to 491 (VGFVLLWAFSCFIFVTANIIL) traverse the membrane as a helical segment. Residues 492–496 (SETKL) lie on the Extracellular side of the membrane.

The protein belongs to the TMEM104 family.

The protein resides in the membrane. The sequence is that of Transmembrane protein 104 (TMEM104) from Homo sapiens (Human).